Consider the following 124-residue polypeptide: Small ribosomal subunit protein uS12 (124 aa).

The disordered stretch occupies residues 1-29; that stretch reads MATINQLVRKGRKRRVAKSNVPALEASPQ. Asp89 bears the 3-methylthioaspartic acid mark. Residues 101-124 form a disordered region; sequence AADTAGVDKRRQGRSKYGAKRPKS. Residues 111-124 show a composition bias toward basic residues; it reads RQGRSKYGAKRPKS.

It belongs to the universal ribosomal protein uS12 family. As to quaternary structure, part of the 30S ribosomal subunit. Contacts proteins S8 and S17. May interact with IF1 in the 30S initiation complex.

In terms of biological role, with S4 and S5 plays an important role in translational accuracy. Interacts with and stabilizes bases of the 16S rRNA that are involved in tRNA selection in the A site and with the mRNA backbone. Located at the interface of the 30S and 50S subunits, it traverses the body of the 30S subunit contacting proteins on the other side and probably holding the rRNA structure together. The combined cluster of proteins S8, S12 and S17 appears to hold together the shoulder and platform of the 30S subunit. The sequence is that of Small ribosomal subunit protein uS12 from Alkalilimnicola ehrlichii (strain ATCC BAA-1101 / DSM 17681 / MLHE-1).